Consider the following 135-residue polypeptide: VRANRCLKGWLDFRGNCYGYFRQELPWRKAEAWCRVVRGGCHLASIHTSEEHRAVAKFISQCRRGEEGDDVWIGLYHWNKSWSWIDGSKMHYSAWDDDDFSKGQYCAALEDSSGFLSWEDDACSERNAFICKCAA.

Intrachain disulfides connect Cys6/Cys17, Cys34/Cys131, and Cys106/Cys123. In terms of domain architecture, C-type lectin spans 13–132 (FRGNCYGYFR…CSERNAFICK (120 aa)).

It localises to the secreted. The protein resides in the extracellular space. It is found in the extracellular matrix. The chain is Rheacalcin-1 from Rhea americana (Greater rhea).